A 518-amino-acid polypeptide reads, in one-letter code: Uronate isomerase (518 aa).

This sequence belongs to the metallo-dependent hydrolases superfamily. Uronate isomerase family.

It carries out the reaction D-glucuronate = D-fructuronate. The catalysed reaction is aldehydo-D-galacturonate = keto-D-tagaturonate. Its pathway is carbohydrate metabolism; pentose and glucuronate interconversion. This Corynebacterium glutamicum (strain ATCC 13032 / DSM 20300 / JCM 1318 / BCRC 11384 / CCUG 27702 / LMG 3730 / NBRC 12168 / NCIMB 10025 / NRRL B-2784 / 534) protein is Uronate isomerase (uxaC).